A 1088-amino-acid polypeptide reads, in one-letter code: Tyrocidine synthase 1 (1088 aa).

A Carrier domain is found at 528–602 (PPRTETESIL…QVALFVKSTT (75 aa)). Serine 563 is subject to O-(pantetheine 4'-phosphoryl)serine.

This sequence belongs to the ATP-dependent AMP-binding enzyme family. In terms of assembly, large multienzyme complex of TycA, TycB and TycC. Requires pantetheine 4'-phosphate as cofactor.

The enzyme catalyses L-phenylalanine + ATP + H2O = D-phenylalanine + AMP + diphosphate + H(+). Its pathway is antibiotic biosynthesis; tyrocidine biosynthesis. Its function is as follows. In the first step of peptide synthesis this enzyme activates phenylalanine and racemizes it to the D-isomer. In Brevibacillus parabrevis, this protein is Tyrocidine synthase 1 (tycA).